The following is a 353-amino-acid chain: 3'-5' exonuclease (353 aa).

Residues 1-119 (MEKYLTKMPI…PSPEKEKPEK (119 aa)) are disordered. Basic and acidic residues-rich tracts occupy residues 13 to 30 (KANEVPKEEAGVKKETPK) and 37 to 50 (KKDTPKELKDKENA). The span at 59–70 (TKGRPGRPAAKR) shows a compositional bias: basic residues. Residues 71-90 (KNLDTPDVTEKLAMEEENPP) show a composition bias toward basic and acidic residues. Phosphoserine occurs at positions 103, 109, and 111. The 169-residue stretch at 145–313 (VLQWVEKQKD…GQVIYRELER (169 aa)) folds into the 3'-5' exonuclease domain. Mg(2+) contacts are provided by Asp-162, Glu-164, and Asp-300.

It belongs to the WRNexo family.

The protein localises to the nucleus. Has exonuclease activity on both single-stranded and duplex templates bearing overhangs, but not blunt ended duplex DNA, and cleaves in a 3'-5' direction. Essential for the formation of DNA replication focal centers. Has an important role in maintaining genome stability. The chain is 3'-5' exonuclease from Drosophila melanogaster (Fruit fly).